The following is a 439-amino-acid chain: Uracil-regulated protein 1 (439 aa).

Positions M1–V24 are disordered. R268 to E272 lines the GTP pocket. The Zn(2+) site is built by C273, C284, and C286. E315–R317 lines the GTP pocket. D353 acts as the Proton acceptor in catalysis. Residue R355 is the Nucleophile of the active site. The GTP site is built by S377 and K382.

It belongs to the GTP cyclohydrolase II family.

It localises to the cytoplasm. It is found in the nucleus. This chain is Uracil-regulated protein 1 (urg1), found in Schizosaccharomyces pombe (strain 972 / ATCC 24843) (Fission yeast).